We begin with the raw amino-acid sequence, 428 residues long: Cytokine-dependent hematopoietic cell linker (428 aa).

The segment at 1–22 (MNRQGNRKTTKEGSNDLKFQNF) is disordered. A phosphotyrosine; by LYN mark is found at Y69 and Y96. Disordered stretches follow at residues 135-198 (DKPI…EVQR) and 244-271 (SSSF…PQRC). The interval 159-164 (PLPPPR) is mediates interaction with PLCG1; essential for BCR signaling; involved in restoration of BCR-induced calcium response and ERK2 and JNK2 activation in BLNK-deficient cells expressing LAT. The segment at 178–180 (PEP) is mediates interaction with LAT, GRB2, and FGR; involved in translocation to the glycolipid-enriched microdomain and restoration of BCR-induced calcium response in BLNK-deficient DT40 cells expressing LAT. Low complexity predominate over residues 244–253 (SSSFTTSNHS). Residues 309 to 419 (WYIGEYSRQA…RKQCHLTQPL (111 aa)) form the SH2 domain.

In terms of assembly, when phosphorylated, interacts with PLCG1, PLCG2, GRB2, VAV and LAT. Interacts with LBR and AGO2. Interacts with FGR. Part of a complex consisting of CLNK, SKAP1 and FYB1. Interacts (via SH2 domain) with FYB1; this interaction allows SKAP1 and FYB1 to promote tyrosine phosphorylation of CLNK by LYN. Interacts (via SH2 domain) with MAP4K1. In terms of processing, tyrosine-phosphorylated upon BCR cross-linking. Tyrosine phosphorylation at both Tyr-69 and Tyr-96 are required for BCR-induced calcium response and are essential to restore PLCG2-mediated signaling in BLNK-deficient DT40 cells, but this phosphorylation is dispensable in cells expressing LAT. Interacts with the SH2 domain of PLCG1 via phosphorylated Tyr-96. Tyrosine phosphorylation is increased when complexed with SKAP1 and FYB1.

The protein resides in the cytoplasm. In terms of biological role, an adapter protein which plays a role in the regulation of immunoreceptor signaling, including PLC-gamma-mediated B-cell antigen receptor (BCR) signaling and FC-epsilon R1-mediated mast cell degranulation. Together with FGR, it acts as a negative regulator of natural killer cell-activating receptors and inhibits interferon-gamma production. Acts as a positive regulator of both T-cell receptor and natural killer T (NKT) cell receptor signaling in CD4-positive NKT cells. Together with MAP4K1, it enhances CD3-triggered activation of T-cells and subsequent IL2 production. May be involved in tumor necrosis factor induced cell death by promoting reactive oxidative species generation, and MLKL oligomerization, ultimately leading to necrosis. Involved in phosphorylation of LAT. May be involved in high affinity immunoglobulin epsilon receptor signaling in mast cells. The protein is Cytokine-dependent hematopoietic cell linker (CLNK) of Homo sapiens (Human).